The chain runs to 166 residues: Large ribosomal subunit protein uL10 (166 aa).

Belongs to the universal ribosomal protein uL10 family. Part of the ribosomal stalk of the 50S ribosomal subunit. The N-terminus interacts with L11 and the large rRNA to form the base of the stalk. The C-terminus forms an elongated spine to which L12 dimers bind in a sequential fashion forming a multimeric L10(L12)X complex.

Its function is as follows. Forms part of the ribosomal stalk, playing a central role in the interaction of the ribosome with GTP-bound translation factors. The chain is Large ribosomal subunit protein uL10 (rplJ) from Streptococcus pyogenes serotype M18 (strain MGAS8232).